The chain runs to 1026 residues: Multidrug resistance protein MdtC (1026 aa).

The next 11 helical transmembrane spans lie at 15–35, 333–353, 360–380, 387–407, 431–451, 463–483, 528–548, 853–873, 897–917, 953–973, and 984–1004; these read ILIA…LPVA, EVEE…FLFL, LIPA…MYLC, LSLM…IVVL, VGFT…PLLL, FAVT…TLTP, LVGV…IAIP, LILI…LYES, LFNA…IGIV, PIMM…LSGG, and ITIV…TPVV.

The protein belongs to the resistance-nodulation-cell division (RND) (TC 2.A.6) family. MdtC subfamily. In terms of assembly, part of a tripartite efflux system composed of MdtA, MdtB and MdtC. MdtC forms a heteromultimer with MdtB.

Its subcellular location is the cell inner membrane. The chain is Multidrug resistance protein MdtC from Salmonella paratyphi A (strain AKU_12601).